The chain runs to 459 residues: Transcription factor Sox-8 (459 aa).

Positions 1–18 (MLNMSSDQEPPCSPTGTA) are enriched in polar residues. Disordered regions lie at residues 1–57 (MLNM…GEEP), 152–247 (ERLR…EGRR), and 293–367 (AIPA…THSD). Residues 19-34 (SSMSHVSDSDSDSPLS) are compositionally biased toward low complexity. Residues 56–96 (EPMDERFPACIRDAVSQVLKGYDWSLVPMPVRGSGGLKAKP) are dimerization (DIM). The segment at residues 98-166 (VKRPMNAFMV…QHKKDHPDYK (69 aa)) is a DNA-binding region (HMG box). 2 stretches are compositionally biased toward basic and acidic residues: residues 152–167 (ERLRVQHKKDHPDYKY) and 231–247 (TDLHHGGKQELKHEGRR). Residues 222 to 297 (PPTPPTTPKT…LNGHGAIPAD (76 aa)) form a transactivation domain (TAM) region. The span at 324 to 338 (SHKSSSTSSSSSIES) shows a compositional bias: low complexity. The transactivation domain (TAC) stretch occupies residues 342–459 (RPHIKTEQLS…QPVYTTLTRP (118 aa)). Polar residues predominate over residues 348–367 (EQLSPSHYNDQSQGSPTHSD). The short motif at 413–421 (SSLYQYPYF) is the 9aaTAD element. The segment at 439–459 (PPSHSPTSNWDQPVYTTLTRP) is disordered.

As to expression, from gastrula to neural stages, expressed in a ventrolateral domain around the blastopore. A second domain of expression appears at mid-gastrula stage (stage 11.5) lateral to the neural plate, in the presumptive neural crest. At neurula stage (stage 15), also expressed in the prospective cement gland. As development proceeds, expression persists in migrating cranial crest cells as they populate the pharyngeal arches, and in trunk neural crest cells. Not expressed early in the otic placode, with otic expression only beginning around stage 30.

The protein resides in the nucleus. Functionally, transcription factor. Acts early in neural crest formation, functioning redundantly with the other group E Sox factors sox9 and sox10 to induce neural crest progenitors. Regulates the onset of expression of many neural crest marker genes including sox10, and regulates the development of multiple neural crest derivatives. May be required to regulate neural crest cell migration. The chain is Transcription factor Sox-8 (sox8) from Xenopus laevis (African clawed frog).